The primary structure comprises 204 residues: Protein OPG030 (204 aa).

A BACK domain is found at 95-177 (FLRQYINNNI…ITYSELTNAI (83 aa)).

Belongs to the orthopoxvirus OPG030 family.

The sequence is that of Protein OPG030 (OPG30) from Bos taurus (Bovine).